Here is a 150-residue protein sequence, read N- to C-terminus: SsrA-binding protein (150 aa).

It belongs to the SmpB family.

It localises to the cytoplasm. In terms of biological role, required for rescue of stalled ribosomes mediated by trans-translation. Binds to transfer-messenger RNA (tmRNA), required for stable association of tmRNA with ribosomes. tmRNA and SmpB together mimic tRNA shape, replacing the anticodon stem-loop with SmpB. tmRNA is encoded by the ssrA gene; the 2 termini fold to resemble tRNA(Ala) and it encodes a 'tag peptide', a short internal open reading frame. During trans-translation Ala-aminoacylated tmRNA acts like a tRNA, entering the A-site of stalled ribosomes, displacing the stalled mRNA. The ribosome then switches to translate the ORF on the tmRNA; the nascent peptide is terminated with the 'tag peptide' encoded by the tmRNA and targeted for degradation. The ribosome is freed to recommence translation, which seems to be the essential function of trans-translation. This Campylobacter curvus (strain 525.92) protein is SsrA-binding protein.